Reading from the N-terminus, the 185-residue chain is Threonylcarbamoyl-AMP synthase (185 aa).

The 182-residue stretch at 4–185 folds into the YrdC-like domain; sequence SWRVQQAAQD…IATGQVMRAG (182 aa).

It belongs to the SUA5 family. TsaC subfamily.

The protein resides in the cytoplasm. The catalysed reaction is L-threonine + hydrogencarbonate + ATP = L-threonylcarbamoyladenylate + diphosphate + H2O. Functionally, required for the formation of a threonylcarbamoyl group on adenosine at position 37 (t(6)A37) in tRNAs that read codons beginning with adenine. Catalyzes the conversion of L-threonine, HCO(3)(-)/CO(2) and ATP to give threonylcarbamoyl-AMP (TC-AMP) as the acyladenylate intermediate, with the release of diphosphate. This is Threonylcarbamoyl-AMP synthase from Pseudomonas savastanoi pv. phaseolicola (strain 1448A / Race 6) (Pseudomonas syringae pv. phaseolicola (strain 1448A / Race 6)).